Reading from the N-terminus, the 184-residue chain is Photosystem I assembly protein Ycf4 (184 aa).

The next 2 membrane-spanning stretches (helical) occupy residues 22-42 (FCWACILFLGSLGFLVVGTSS) and 57-77 (ILFFPQGIVMSFYGIAGLFIS).

It belongs to the Ycf4 family.

The protein resides in the plastid. Its subcellular location is the chloroplast thylakoid membrane. In terms of biological role, seems to be required for the assembly of the photosystem I complex. The sequence is that of Photosystem I assembly protein Ycf4 from Phalaenopsis aphrodite subsp. formosana (Moth orchid).